Reading from the N-terminus, the 318-residue chain is 2-dehydro-3-deoxygalactonokinase (318 aa).

Substrate is bound by residues 35-39, Y90, 105-107, and R169; these read GAESN and YDR. ATP-binding positions include 167–169, 228–233, and 257–260; these read NYR, TRGEDG, and GTGD. Substrate is bound by residues D260 and D296. The active-site Proton acceptor is D260.

This sequence belongs to the carbohydrate kinase PfkB family. Homohexamer.

It carries out the reaction 2-dehydro-3-deoxy-D-galactonate + ATP = 2-dehydro-3-deoxy-6-phospho-D-galactonate + ADP + H(+). Its function is as follows. Involved in galactose catabolism. Catalyzes the phosphorylation of 2-keto-3-deoxygalactonate (KDGal) to produce 2-keto-3-deoxy-6-phosphogalactonate (KDPGal). Can also phosphorylate 2-keto-3-deoxygluconate (KDG) to 2-keto-3-deoxy-6-phosphogluconate (KDPG), but the catalytic efficiency for KDGal is 50-fold higher than for KDG. This Haloferax volcanii (strain ATCC 29605 / DSM 3757 / JCM 8879 / NBRC 14742 / NCIMB 2012 / VKM B-1768 / DS2) (Halobacterium volcanii) protein is 2-dehydro-3-deoxygalactonokinase.